Reading from the N-terminus, the 205-residue chain is Regulatory protein RecX (205 aa).

The protein belongs to the RecX family.

The protein resides in the cytoplasm. In terms of biological role, modulates RecA activity. The sequence is that of Regulatory protein RecX from Finegoldia magna (strain ATCC 29328 / DSM 20472 / WAL 2508) (Peptostreptococcus magnus).